We begin with the raw amino-acid sequence, 380 residues long: Cytochrome b (380 aa).

Transmembrane regions (helical) follow at residues F33–M53, W77–I98, W113–L133, and F178–I198. The heme b site is built by H83 and H97. H182 and H196 together coordinate heme b. H201 provides a ligand contact to a ubiquinone. The next 4 membrane-spanning stretches (helical) occupy residues Y226–S246, L288–H308, F320–G340, and F347–P367.

This sequence belongs to the cytochrome b family. In terms of assembly, the cytochrome bc1 complex contains 3 respiratory subunits (MT-CYB, CYC1 and UQCRFS1), 2 core proteins (UQCRC1 and UQCRC2) and probably 6 low-molecular weight proteins. Heme b serves as cofactor.

It localises to the mitochondrion inner membrane. Component of the ubiquinol-cytochrome c reductase complex (complex III or cytochrome b-c1 complex) that is part of the mitochondrial respiratory chain. The b-c1 complex mediates electron transfer from ubiquinol to cytochrome c. Contributes to the generation of a proton gradient across the mitochondrial membrane that is then used for ATP synthesis. The polypeptide is Cytochrome b (mt-cyb) (Astronotus ocellatus (Oscar)).